The primary structure comprises 76 residues: Small ribosomal subunit protein bS18 (76 aa).

Belongs to the bacterial ribosomal protein bS18 family. In terms of assembly, part of the 30S ribosomal subunit. Forms a tight heterodimer with protein bS6.

Binds as a heterodimer with protein bS6 to the central domain of the 16S rRNA, where it helps stabilize the platform of the 30S subunit. The polypeptide is Small ribosomal subunit protein bS18 (Carboxydothermus hydrogenoformans (strain ATCC BAA-161 / DSM 6008 / Z-2901)).